The chain runs to 181 residues: MMRFVYIYILVIYGSYLWFSLGGNMFTINSTNRVASTIAPYACVSDVNLEDKATFLDEHTSIHANDSSLQCFVLNDQHVPQNTLATDVEGYNRGLQERISLEYQPLESIVFLLGTPAVLETKESLSLPVSPDALTQKLLSISSNDECKLSGSTSCTTPASHNPPSGYIAQYRHSAEVFPDE.

The helical transmembrane segment at 4-24 (FVYIYILVIYGSYLWFSLGGN) threads the bilayer.

Interacts with host (human) STAT3.

The protein resides in the membrane. Its subcellular location is the host cytoplasm. Functionally, a Salmonella strain-specific effector that induces a host STAT3-dependent anti-inflammatory pathway. In bacteria-infected host cells (human) leads to phosphorylation of host STAT3, at least on 'Tyr-705' and interleukin-10 (IL-10, IL10) production; expressing the gene alone in host cells induces STAT3 phosphorylation and IL-10 production. IL-10 production requires STAT3 in infected cells. Contributes to virulence in mouse infection models. Encoded in only a few S.typhimurium serovars, it may be a specific effector for adaptation to bovine hosts. The sequence is that of Salmonella anti-inflammatory response activator from Salmonella typhimurium (strain 14028s / SGSC 2262).